The chain runs to 128 residues: Anti-sigma-F factor antagonist RsfA (128 aa).

Residues 17–128 (LKATIQHHDS…PTTESALSAT (112 aa)) enclose the STAS domain. C73 and C109 are joined by a disulfide.

It belongs to the anti-sigma-factor antagonist family. Monomer. Interacts with anti-sigma-F factor RsbW (UsfX).

Functionally, positive, redox-sensitive regulator of sigma-F (SigF) activity. When reduced binds to anti-sigma-F factor RsbW (UsfX) preventing its binding to SigF, thus activating transcription. The polypeptide is Anti-sigma-F factor antagonist RsfA (rsfA) (Mycobacterium tuberculosis (strain CDC 1551 / Oshkosh)).